The following is an 84-amino-acid chain: Fulditoxin (84 aa).

The N-terminal stretch at 1–21 is a signal peptide; sequence MKTLLLTLVVVTIVCLDLGNS. 4 disulfides stabilise this stretch: C24–C41, C34–C59, C63–C71, and C72–C77. H50 lines the Zn(2+) pocket.

Belongs to the three-finger toxin family. Short-chain subfamily. Homodimer; non-covalently linked. Is able to form a tetramer of dimers in the presence of 2 zinc ions. In terms of tissue distribution, expressed by the venom gland.

The protein resides in the secreted. Its function is as follows. Postsynaptic neurotoxin that produces potent, and completely reversible, postsynaptic neuromuscular blockade, as well as broad spectrum inhibition of human muscle and neuronal nicotinic acetylcholine receptors (nAChRs). Inhibition is potent or moderate, depending on the receptor (alpha-1-beta-1-delta-epsilon/CHRNA1-CHRNB1-CHRND-CHRNE (IC(50)=2.56 uM), alpha-4-beta-2/CHRNA4-CHRNB2 (IC(50)=1.8 uM), alpha-7/CHRNA7 (IC(50)=7 uM), and alpha-3-beta-2/CHRNA3-CHRNB2 (IC(50)=12.6 uM)). Acts as a competitive antagonist of ACh. Binds to chicken muscle-type nicotinic acetylcholine receptor (AChR) with high potency compared with the cloned human receptor. Unlike short-chain alpha-3FTxs that only bind to muscle nAChRs, this toxin utilizes dimerization to expand its pharmacological targets to block neuronal nAChRs. The chain is Fulditoxin from Micrurus fulvius (Eastern coral snake).